A 133-amino-acid polypeptide reads, in one-letter code: Homeobox protein HD-5 (133 aa).

Residues 34 to 93 constitute a DNA-binding region (homeobox); the sequence is SKRSRLKLSGQQIDVLESNFKIDSHPNSATKSLLSNALSIPLKNIQIWFQNRRAKEKTAR. Positions 86-109 are disordered; it reads RAKEKTARDGGRRRSGNAEIEDGE.

The protein localises to the nucleus. In Encephalitozoon cuniculi (strain GB-M1) (Microsporidian parasite), this protein is Homeobox protein HD-5 (HD-5).